A 101-amino-acid polypeptide reads, in one-letter code: Urease subunit beta (101 aa).

The protein belongs to the urease beta subunit family. Heterotrimer of UreA (gamma), UreB (beta) and UreC (alpha) subunits. Three heterotrimers associate to form the active enzyme.

Its subcellular location is the cytoplasm. The catalysed reaction is urea + 2 H2O + H(+) = hydrogencarbonate + 2 NH4(+). The protein operates within nitrogen metabolism; urea degradation; CO(2) and NH(3) from urea (urease route): step 1/1. The polypeptide is Urease subunit beta (Ralstonia pickettii (strain 12J)).